A 212-amino-acid polypeptide reads, in one-letter code: Thiamine-phosphate synthase (212 aa).

4-amino-2-methyl-5-(diphosphooxymethyl)pyrimidine-binding positions include 35 to 39 and Asn67; that span reads QLRRK. Mg(2+) contacts are provided by Asp68 and Asp87. Ser106 is a 4-amino-2-methyl-5-(diphosphooxymethyl)pyrimidine binding site. A 2-[(2R,5Z)-2-carboxy-4-methylthiazol-5(2H)-ylidene]ethyl phosphate-binding site is contributed by 132–134; it reads TGS. Lys135 contributes to the 4-amino-2-methyl-5-(diphosphooxymethyl)pyrimidine binding site. 2-[(2R,5Z)-2-carboxy-4-methylthiazol-5(2H)-ylidene]ethyl phosphate is bound by residues Gly163 and 183–184; that span reads IS.

This sequence belongs to the thiamine-phosphate synthase family. Mg(2+) serves as cofactor.

The enzyme catalyses 2-[(2R,5Z)-2-carboxy-4-methylthiazol-5(2H)-ylidene]ethyl phosphate + 4-amino-2-methyl-5-(diphosphooxymethyl)pyrimidine + 2 H(+) = thiamine phosphate + CO2 + diphosphate. The catalysed reaction is 2-(2-carboxy-4-methylthiazol-5-yl)ethyl phosphate + 4-amino-2-methyl-5-(diphosphooxymethyl)pyrimidine + 2 H(+) = thiamine phosphate + CO2 + diphosphate. It carries out the reaction 4-methyl-5-(2-phosphooxyethyl)-thiazole + 4-amino-2-methyl-5-(diphosphooxymethyl)pyrimidine + H(+) = thiamine phosphate + diphosphate. Its pathway is cofactor biosynthesis; thiamine diphosphate biosynthesis; thiamine phosphate from 4-amino-2-methyl-5-diphosphomethylpyrimidine and 4-methyl-5-(2-phosphoethyl)-thiazole: step 1/1. Condenses 4-methyl-5-(beta-hydroxyethyl)thiazole monophosphate (THZ-P) and 2-methyl-4-amino-5-hydroxymethyl pyrimidine pyrophosphate (HMP-PP) to form thiamine monophosphate (TMP). This is Thiamine-phosphate synthase from Chlorobium luteolum (strain DSM 273 / BCRC 81028 / 2530) (Pelodictyon luteolum).